We begin with the raw amino-acid sequence, 351 residues long: Protein MSS2, mitochondrial (351 aa).

TPR repeat units follow at residues 155 to 188 (HLTVKLIGDLFFENKTYDKAEKYYQEFLKLENST) and 260 to 294 (KECFKTLGFLELNYFNNYERAKEWFKTGMEIMDLE).

Interacts with COX18.

Its subcellular location is the mitochondrion inner membrane. Functionally, required to stabilize mitochondrial cytochrome C oxidase subunit 2 (COX2) and to translocate the C-terminal domain of COX2 through the inner membrane. The sequence is that of Protein MSS2, mitochondrial (MSS2) from Saccharomyces cerevisiae (strain ATCC 204508 / S288c) (Baker's yeast).